Reading from the N-terminus, the 70-residue chain is ATP synthase subunit c (70 aa).

Helical transmembrane passes span 3-23 (ALAA…IGIA) and 44-64 (LFFI…VIAI).

It belongs to the ATPase C chain family. In terms of assembly, F-type ATPases have 2 components, F(1) - the catalytic core - and F(0) - the membrane proton channel. F(1) has five subunits: alpha(3), beta(3), gamma(1), delta(1), epsilon(1). F(0) has three main subunits: a(1), b(2) and c(10-14). The alpha and beta chains form an alternating ring which encloses part of the gamma chain. F(1) is attached to F(0) by a central stalk formed by the gamma and epsilon chains, while a peripheral stalk is formed by the delta and b chains.

It localises to the cell membrane. In terms of biological role, f(1)F(0) ATP synthase produces ATP from ADP in the presence of a proton or sodium gradient. F-type ATPases consist of two structural domains, F(1) containing the extramembraneous catalytic core and F(0) containing the membrane proton channel, linked together by a central stalk and a peripheral stalk. During catalysis, ATP synthesis in the catalytic domain of F(1) is coupled via a rotary mechanism of the central stalk subunits to proton translocation. Its function is as follows. Key component of the F(0) channel; it plays a direct role in translocation across the membrane. A homomeric c-ring of between 10-14 subunits forms the central stalk rotor element with the F(1) delta and epsilon subunits. The polypeptide is ATP synthase subunit c (Caldicellulosiruptor saccharolyticus (strain ATCC 43494 / DSM 8903 / Tp8T 6331)).